A 329-amino-acid chain; its full sequence is DNA-directed RNA polymerase subunit alpha (329 aa).

Positions 1-235 (MQGSVTEFLK…EQLDAFVDLR (235 aa)) are alpha N-terminal domain (alpha-NTD). The interval 249–329 (FDPILLRPVD…NWPPASIAED (81 aa)) is alpha C-terminal domain (alpha-CTD).

It belongs to the RNA polymerase alpha chain family. In terms of assembly, homodimer. The RNAP catalytic core consists of 2 alpha, 1 beta, 1 beta' and 1 omega subunit. When a sigma factor is associated with the core the holoenzyme is formed, which can initiate transcription.

The catalysed reaction is RNA(n) + a ribonucleoside 5'-triphosphate = RNA(n+1) + diphosphate. DNA-dependent RNA polymerase catalyzes the transcription of DNA into RNA using the four ribonucleoside triphosphates as substrates. The polypeptide is DNA-directed RNA polymerase subunit alpha (Actinobacillus pleuropneumoniae serotype 5b (strain L20)).